Consider the following 247-residue polypeptide: Cell division protein ZapD (247 aa).

The protein belongs to the ZapD family. As to quaternary structure, interacts with FtsZ.

It localises to the cytoplasm. Cell division factor that enhances FtsZ-ring assembly. Directly interacts with FtsZ and promotes bundling of FtsZ protofilaments, with a reduction in FtsZ GTPase activity. In Shigella boydii serotype 4 (strain Sb227), this protein is Cell division protein ZapD.